We begin with the raw amino-acid sequence, 694 residues long: Elongation factor G (694 aa).

The 280-residue stretch at 8–287 (EDYRNFGIMA…AVVEFLPAPT (280 aa)) folds into the tr-type G domain. Residues 17–24 (AHIDAGKT), 86–90 (DTPGH), and 140–143 (NKMD) contribute to the GTP site.

The protein belongs to the TRAFAC class translation factor GTPase superfamily. Classic translation factor GTPase family. EF-G/EF-2 subfamily.

Its subcellular location is the cytoplasm. Functionally, catalyzes the GTP-dependent ribosomal translocation step during translation elongation. During this step, the ribosome changes from the pre-translocational (PRE) to the post-translocational (POST) state as the newly formed A-site-bound peptidyl-tRNA and P-site-bound deacylated tRNA move to the P and E sites, respectively. Catalyzes the coordinated movement of the two tRNA molecules, the mRNA and conformational changes in the ribosome. The sequence is that of Elongation factor G from Brucella ovis (strain ATCC 25840 / 63/290 / NCTC 10512).